A 342-amino-acid polypeptide reads, in one-letter code: Putative ABC transporter anion-binding protein HVO_1888 (342 aa).

Positions 1–32 (MAIERRRFLQAAGVGAVLGLSGCTGNTSPPQA) form a signal peptide, tat-type signal. Polar residues predominate over residues 24 to 37 (TGNTSPPQANNETA). The disordered stretch occupies residues 24–52 (TGNTSPPQANNETAEGSGGSESGDGSTQE).

The complex is composed of two ATP-binding proteins (HVO_1886), two transmembrane proteins (HVO_1887) and a solute-binding protein (HVO_1888). Post-translationally, predicted to be exported by the Tat system. The position of the signal peptide cleavage has not been experimentally proven.

Part of an ABC transporter complex involved in anions import. This chain is Putative ABC transporter anion-binding protein HVO_1888, found in Haloferax volcanii (strain ATCC 29605 / DSM 3757 / JCM 8879 / NBRC 14742 / NCIMB 2012 / VKM B-1768 / DS2) (Halobacterium volcanii).